We begin with the raw amino-acid sequence, 207 residues long: Ribosomal RNA small subunit methyltransferase G (207 aa).

S-adenosyl-L-methionine contacts are provided by residues glycine 73, leucine 78, 124 to 125 (VE), and arginine 139.

The protein belongs to the methyltransferase superfamily. RNA methyltransferase RsmG family.

The protein localises to the cytoplasm. The catalysed reaction is guanosine(527) in 16S rRNA + S-adenosyl-L-methionine = N(7)-methylguanosine(527) in 16S rRNA + S-adenosyl-L-homocysteine. In terms of biological role, specifically methylates the N7 position of guanine in position 527 of 16S rRNA. This is Ribosomal RNA small subunit methyltransferase G from Cronobacter sakazakii (strain ATCC BAA-894) (Enterobacter sakazakii).